Consider the following 566-residue polypeptide: Proline--tRNA ligase (566 aa).

This sequence belongs to the class-II aminoacyl-tRNA synthetase family. ProS type 1 subfamily. Homodimer.

Its subcellular location is the cytoplasm. The enzyme catalyses tRNA(Pro) + L-proline + ATP = L-prolyl-tRNA(Pro) + AMP + diphosphate. Functionally, catalyzes the attachment of proline to tRNA(Pro) in a two-step reaction: proline is first activated by ATP to form Pro-AMP and then transferred to the acceptor end of tRNA(Pro). As ProRS can inadvertently accommodate and process non-cognate amino acids such as alanine and cysteine, to avoid such errors it has two additional distinct editing activities against alanine. One activity is designated as 'pretransfer' editing and involves the tRNA(Pro)-independent hydrolysis of activated Ala-AMP. The other activity is designated 'posttransfer' editing and involves deacylation of mischarged Ala-tRNA(Pro). The misacylated Cys-tRNA(Pro) is not edited by ProRS. This is Proline--tRNA ligase from Bacillus cereus (strain B4264).